The following is a 271-amino-acid chain: Neurexophilin-1 (271 aa).

The first 21 residues, 1-21, serve as a signal peptide directing secretion; sequence MQAACWYVLFLLQPTVYLVTC. Residues 22–97 form an II region; that stretch reads ANLTNGGKSE…WDWLRNSTDL (76 aa). Residues asparagine 23, asparagine 68, asparagine 93, asparagine 146, asparagine 156, and asparagine 162 are each glycosylated (N-linked (GlcNAc...) asparagine). Residues 98 to 176 form an III region; that stretch reads QEPRPRAKRR…LVPPTKIVEF (79 aa). Positions 177 to 185 are IV (linker domain); sequence DLAQQTVID. The tract at residues 186–271 is v (Cys-rich); sequence AKDSKSFNCR…HSDTPYFPSG (86 aa).

This sequence belongs to the neurexophilin family.

The protein localises to the secreted. Its function is as follows. May be signaling molecules that resemble neuropeptides and that act by binding to alpha-neurexins and possibly other receptors. The sequence is that of Neurexophilin-1 (NXPH1) from Homo sapiens (Human).